The chain runs to 127 residues: Thioredoxin domain-containing protein 8 (127 aa).

One can recognise a Thioredoxin domain in the interval 2–127 (VKRIKNMSEL…QLEKKIQELM (126 aa)). Residues C32 and C35 are joined by a disulfide bond.

This sequence belongs to the thioredoxin family. Testis-specific. Only expressed during spermiogenesis, prominently in the Golgi apparatus of pachytene spermatocytes and round and elongated spermatids, with a transient localization in the developing acrosome of round spermatids (at protein level).

It localises to the cytoplasm. It is found in the golgi apparatus. Its function is as follows. May be required for post-translational modifications of proteins required for acrosomal biogenesis. May act by reducing disulfide bonds within the sperm. The protein is Thioredoxin domain-containing protein 8 (Txndc8) of Mus musculus (Mouse).